We begin with the raw amino-acid sequence, 432 residues long: MTNASTESFFNRSLADVDPDIFGAIGKELGRQRHEIELIASENIVSRAVLEAQGSIMTNKYAEGYPGKRYYGGCQFVDIAEELAIERAKKLFGVNFANVQPNSGSQMNQAVFLALLQPGDTFMGLDLNSGGHLTHGSPVNMSGKWFNVVSYGVREGDNLLDMDEVARKAEETKPKLIIAGGTAYSRIWDWKRFREIADSVGAYLMVDMAHIAGLVAGGVHPSPFPHCHVATTTTHKSLRGPRGGVILTNDEDLAKKFNSAVFPGLQGGPLMHIIAAKAVAFGEALQPEFKDYAAQVVKNAKALAETLISGGLDVVSGGTDNHLMLVDLRKKNATGKRAEAALGRAYVTCNKNGIPFDPEKPFVTSGVRLGAPAGTTRGFKEAEFREIGNLIVEVLDGLKVANSDEGNAAVEAAVRGKVVSLTDRFPMYGYMG.

Residues leucine 127 and 131 to 133 each bind (6S)-5,6,7,8-tetrahydrofolate; that span reads GHL. Lysine 236 carries the N6-(pyridoxal phosphate)lysine modification.

Belongs to the SHMT family. Homodimer. Requires pyridoxal 5'-phosphate as cofactor.

It localises to the cytoplasm. It catalyses the reaction (6R)-5,10-methylene-5,6,7,8-tetrahydrofolate + glycine + H2O = (6S)-5,6,7,8-tetrahydrofolate + L-serine. Its pathway is one-carbon metabolism; tetrahydrofolate interconversion. The protein operates within amino-acid biosynthesis; glycine biosynthesis; glycine from L-serine: step 1/1. Its function is as follows. Catalyzes the reversible interconversion of serine and glycine with tetrahydrofolate (THF) serving as the one-carbon carrier. This reaction serves as the major source of one-carbon groups required for the biosynthesis of purines, thymidylate, methionine, and other important biomolecules. Also exhibits THF-independent aldolase activity toward beta-hydroxyamino acids, producing glycine and aldehydes, via a retro-aldol mechanism. This is Serine hydroxymethyltransferase from Rhizobium johnstonii (strain DSM 114642 / LMG 32736 / 3841) (Rhizobium leguminosarum bv. viciae).